Here is a 312-residue protein sequence, read N- to C-terminus: Eukaryotic translation initiation factor 2 subunit 2 (312 aa).

Disordered regions lie at residues 26–104 (AALG…NLDM) and 125–146 (ADQADDDKSEDKENDEDNSSTW). Residue Ser-44 is modified to Phosphoserine. 2 stretches are compositionally biased toward acidic residues: residues 90–102 (AASEEPEEEEINL) and 125–142 (ADQADDDKSEDKENDEDN). Ser-133 is modified (phosphoserine). Thr-145 is modified (phosphothreonine). A C4-type zinc finger spans residues 260 to 284 (CHTCRSPETILQKDTRLFFLQCESC).

This sequence belongs to the eIF-2-beta/eIF-5 family. Eukaryotic translation initiation factor 2 eIF2 is a heterotrimeric complex composed of an alpha, a beta and a gamma subunit.

It is found in the cytoplasm. It localises to the cytosol. Component of the eIF2 complex that functions in the early steps of protein synthesis by forming a ternary complex with GTP and initiator tRNA. This complex binds to a 40S ribosomal subunit, followed by mRNA binding to form a 43S pre-initiation complex (43S PIC). Junction of the 60S ribosomal subunit to form the 80S initiation complex is preceded by hydrolysis of the GTP bound to eIF2 and release of an eIF2-GDP binary complex. In order for eIF2 to recycle and catalyze another round of initiation, the GDP bound to eIF2 must exchange with GTP by way of a reaction catalyzed by eIF2B. In Drosophila melanogaster (Fruit fly), this protein is Eukaryotic translation initiation factor 2 subunit 2.